We begin with the raw amino-acid sequence, 147 residues long: Nucleoside diphosphate kinase (147 aa).

ATP is bound by residues K9, F57, R85, T91, R102, and N112. The active-site Pros-phosphohistidine intermediate is H115.

This sequence belongs to the NDK family. The cofactor is Mg(2+).

The protein localises to the cytoplasm. It carries out the reaction a 2'-deoxyribonucleoside 5'-diphosphate + ATP = a 2'-deoxyribonucleoside 5'-triphosphate + ADP. The catalysed reaction is a ribonucleoside 5'-diphosphate + ATP = a ribonucleoside 5'-triphosphate + ADP. Its function is as follows. Major role in the synthesis of nucleoside triphosphates other than ATP. The ATP gamma phosphate is transferred to the NDP beta phosphate via a ping-pong mechanism, using a phosphorylated active-site intermediate. The chain is Nucleoside diphosphate kinase from Thermoplasma volcanium (strain ATCC 51530 / DSM 4299 / JCM 9571 / NBRC 15438 / GSS1).